Consider the following 206-residue polypeptide: Flavin reductase (NADPH) (206 aa).

NADP(+)-binding residues include G10, T12, G13, Q14, T15, R35, S38, and R39. S42 carries the phosphoserine modification. 5 residues coordinate NADP(+): D54, V55, L75, G76, and R78. S82 carries the phosphoserine modification. NADP(+)-binding residues include M87, C109, H132, H153, and I154. The S-nitroso-cysteine intermediate; for S-nitroso-CoA-dependent nitrosyltransferase activity role is filled by C109. C188 functions as the S-nitroso-cysteine intermediate; for S-nitroso-CoA-dependent nitrosyltransferase activity in the catalytic mechanism.

Belongs to the BLVRB family. Monomer. In terms of tissue distribution, predominantly expressed in liver and erythrocytes. At lower levels in heart, lung, adrenal gland and cerebrum. Expressed in adult red blood cells.

The protein localises to the cytoplasm. The catalysed reaction is reduced riboflavin + NADP(+) = riboflavin + NADPH + 2 H(+). The enzyme catalyses bilirubin IXbeta + NADP(+) = biliverdin IXbeta + NADPH + H(+). It carries out the reaction FMNH2 + NAD(+) = FMN + NADH + 2 H(+). It catalyses the reaction FMNH2 + NADP(+) = FMN + NADPH + 2 H(+). The catalysed reaction is S-nitroso-CoA + L-cysteinyl-[protein] = S-nitroso-L-cysteinyl-[protein] + CoA. The enzyme catalyses L-cysteinyl-[SCAN] + S-nitroso-CoA = S-nitroso-L-cysteinyl-[SCAN] + CoA. It carries out the reaction S-nitroso-L-cysteinyl-[SCAN] + L-cysteinyl-[protein] = L-cysteinyl-[SCAN] + S-nitroso-L-cysteinyl-[protein]. Its activity is regulated as follows. Mesobiliverdin acts as a competitive inhibitor for flavin reduction, indicating that flavin and tetrapyrrole substrates compete for the same site. Inhibited by a wide range of xanthene-based drugs, such as phloxine B, erythrosin B, tamibarotene, sulfasalazine, olsalazine, febuxostat, ataluren (PTC124) and deferasirox. In terms of biological role, enzyme that can both act as a NAD(P)H-dependent reductase and a S-nitroso-CoA-dependent nitrosyltransferase. Promotes fetal heme degradation during development. Also expressed in adult tissues, where it acts as a regulator of hematopoiesis, intermediary metabolism (glutaminolysis, glycolysis, TCA cycle and pentose phosphate pathway) and insulin signaling. Has a broad specificity oxidoreductase activity by catalyzing the NAD(P)H-dependent reduction of a variety of flavins, such as riboflavin, FAD or FMN, biliverdins, methemoglobin and PQQ (pyrroloquinoline quinone). Contributes to fetal heme catabolism by catalyzing reduction of biliverdin IXbeta into bilirubin IXbeta in the liver. Biliverdin IXbeta, which constitutes the major heme catabolite in the fetus is not present in adult. Does not reduce bilirubin IXalpha. Can also reduce the complexed Fe(3+) iron to Fe(2+) in the presence of FMN and NADPH. Acts as a protein nitrosyltransferase by catalyzing nitrosylation of cysteine residues of target proteins, such as HMOX2, INSR and IRS1. S-nitroso-CoA-dependent nitrosyltransferase activity is mediated via a 'ping-pong' mechanism: BLVRB first associates with both S-nitroso-CoA and protein substrate, nitric oxide group is then transferred from S-nitroso-CoA to Cys-109 and Cys-188 residues of BLVRB and from S-nitroso-BLVRB to the protein substrate. Inhibits insulin signaling by mediating nitrosylation of INSR and IRS1, leading to their inhibition. This chain is Flavin reductase (NADPH), found in Homo sapiens (Human).